Consider the following 199-residue polypeptide: MTSCGQQSLNVLAVLFSLLFSAVLSAHFRVCEPYTDHKGRYHFGFHCPRLSDNKTFILCCHHNNTVFKYCCNETEFQAVMQANLTASSEGYMHNNYTALLGVWIYGFFVLMLLVLDLLYYSAMNYDICKVYLARWGIQGRWMKQDPRRWGNPARAPRPGQRAPQPQPPPGPLPQAPQAVHTLRGDAHSPPLMTFQSSSA.

The first 25 residues, 1-25 (MTSCGQQSLNVLAVLFSLLFSAVLS), serve as a signal peptide directing secretion. Residues 26 to 97 (AHFRVCEPYT…SEGYMHNNYT (72 aa)) lie on the Extracellular side of the membrane. 2 N-linked (GlcNAc...) asparagine glycosylation sites follow: Asn-53 and Asn-95. Residues 98–118 (ALLGVWIYGFFVLMLLVLDLL) traverse the membrane as a helical segment. Residues 119–199 (YYSAMNYDIC…PLMTFQSSSA (81 aa)) are Cytoplasmic-facing. The interval 146 to 199 (PRRWGNPARAPRPGQRAPQPQPPPGPLPQAPQAVHTLRGDAHSPPLMTFQSSSA) is disordered. Positions 152–163 (PARAPRPGQRAP) are enriched in low complexity. The segment covering 164-174 (QPQPPPGPLPQ) has biased composition (pro residues).

Belongs to the shisa family.

It localises to the membrane. This chain is Protein shisa-like-1, found in Homo sapiens (Human).